A 1378-amino-acid polypeptide reads, in one-letter code: DNA-directed RNA polymerase subunit beta (1378 aa).

This sequence belongs to the RNA polymerase beta chain family. As to quaternary structure, the RNAP catalytic core consists of 2 alpha, 1 beta, 1 beta' and 1 omega subunit. When a sigma factor is associated with the core the holoenzyme is formed, which can initiate transcription.

The catalysed reaction is RNA(n) + a ribonucleoside 5'-triphosphate = RNA(n+1) + diphosphate. In terms of biological role, DNA-dependent RNA polymerase catalyzes the transcription of DNA into RNA using the four ribonucleoside triphosphates as substrates. This chain is DNA-directed RNA polymerase subunit beta, found in Campylobacter jejuni (strain RM1221).